The following is a 421-amino-acid chain: Putative NBPF family member NBPF7 (421 aa).

A coiled-coil region spans residues 87-143; sequence IKSMLREELQFKEEKLAEQLKQAEELRQYKVLVHSQERELIQLREKLREGRDASHSL. Disordered stretches follow at residues 179–251, 312–334, and 402–421; these read VHKL…KITS, EKEVLQDSPEERVTTSCSDHDVS, and YNSKPSSIPNTTLQGSFTED. 2 Olduvai domains span residues 190–279 and 280–391; these read EDEN…NILL and ENQN…RMSQ. Basic and acidic residues predominate over residues 194-217; it reads DKTKELDKVQESPAPREEQKAEEK. Positions 230–243 are enriched in polar residues; it reads TYSNSHGPSDSNPP. The span at 312–333 shows a compositional bias: basic and acidic residues; it reads EKEVLQDSPEERVTTSCSDHDV. Positions 403–421 are enriched in polar residues; the sequence is NSKPSSIPNTTLQGSFTED.

It belongs to the NBPF family.

The protein localises to the cytoplasm. This Homo sapiens (Human) protein is Putative NBPF family member NBPF7.